The chain runs to 393 residues: NAD(P)H-quinone oxidoreductase subunit H, chloroplastic (393 aa).

It belongs to the complex I 49 kDa subunit family. In terms of assembly, NDH is composed of at least 16 different subunits, 5 of which are encoded in the nucleus.

Its subcellular location is the plastid. It localises to the chloroplast thylakoid membrane. It carries out the reaction a plastoquinone + NADH + (n+1) H(+)(in) = a plastoquinol + NAD(+) + n H(+)(out). The enzyme catalyses a plastoquinone + NADPH + (n+1) H(+)(in) = a plastoquinol + NADP(+) + n H(+)(out). Functionally, NDH shuttles electrons from NAD(P)H:plastoquinone, via FMN and iron-sulfur (Fe-S) centers, to quinones in the photosynthetic chain and possibly in a chloroplast respiratory chain. The immediate electron acceptor for the enzyme in this species is believed to be plastoquinone. Couples the redox reaction to proton translocation, and thus conserves the redox energy in a proton gradient. The polypeptide is NAD(P)H-quinone oxidoreductase subunit H, chloroplastic (Jasminum nudiflorum (Winter jasmine)).